A 350-amino-acid polypeptide reads, in one-letter code: Delta(6)-protoilludene synthase STEHIDRAFT_64702 (350 aa).

Mg(2+) contacts are provided by D89, N225, S229, and E233. A D(D/E)XX(D/E) motif motif is present at residues 89 to 93 (DEHSD). Residues 225-233 (NDIVSYNIE) carry the NSE motif motif. Positions 314 and 315 each coordinate (2E,6E)-farnesyl diphosphate.

The protein belongs to the terpene synthase family. It depends on Mg(2+) as a cofactor. The cofactor is Mn(2+). Requires Ca(2+) as cofactor. Ni(2+) serves as cofactor. Co(2+) is required as a cofactor.

The enzyme catalyses (2E,6E)-farnesyl diphosphate = Delta(6)-protoilludene + diphosphate. It carries out the reaction (2E,6E)-farnesyl diphosphate = alpha-selinene + diphosphate. Its activity is regulated as follows. Ca(2+) switches the cyclization mechanism of delta(6)-protoilludene synthase from 1,11 to 1,10 cyclization which leads to the production of beta-elemene. In terms of biological role, terpene cyclase that catalyzes the cyclization of farnesyl diphosphate (FPP) to delta(6)-protoilludene. In presence of Ca(2+), a significant switch from 1,11 to a dual 1,11/1,10 cyclization occurs, producing beta-elemene as the major product, with lower levels of delta(6)-protoilludene and (E)-beta-caryophyllene, and traces of beta-selinene and alpha-selinene. The chain is Delta(6)-protoilludene synthase STEHIDRAFT_64702 from Stereum hirsutum (strain FP-91666) (White-rot fungus).